We begin with the raw amino-acid sequence, 299 residues long: YjeF N-terminal domain-containing protein 3 (299 aa).

A YjeF N-terminal domain is found at 74-287; it reads AAALERELLE…DVRRKFALRL (214 aa).

As to quaternary structure, interacts with APOA1. Binds to HDL. As to expression, expressed in theca cells in ovary and in Leydig cells in testis (at protein level). Also expressed in brain and mammary gland.

Its function is as follows. May accelerate cholesterol efflux from endothelial cells to high-density lipoprotein (HDL) and thereby regulates angiogenesis. May orchestrate hematopoietic stem and progenitor cell emergence from the hemogenic endothelium, a type of specialized endothelium manifesting hematopoietic potential. YJEFN3-mediated cholesterol efflux activates endothelial SREBF2, the master transcription factor for cholesterol biosynthesis, which in turn transactivates NOTCH and promotes hematopoietic stem and progenitor cell emergence. May play a role in spermiogenesis and oogenesis. The sequence is that of YjeF N-terminal domain-containing protein 3 (YJEFN3) from Homo sapiens (Human).